A 199-amino-acid polypeptide reads, in one-letter code: FMN-dependent NADH:quinone oxidoreductase (199 aa).

FMN contacts are provided by residues Ser-9 and 95–98; that span reads MYNF.

This sequence belongs to the azoreductase type 1 family. As to quaternary structure, homodimer. FMN serves as cofactor.

It carries out the reaction 2 a quinone + NADH + H(+) = 2 a 1,4-benzosemiquinone + NAD(+). It catalyses the reaction N,N-dimethyl-1,4-phenylenediamine + anthranilate + 2 NAD(+) = 2-(4-dimethylaminophenyl)diazenylbenzoate + 2 NADH + 2 H(+). Its function is as follows. Quinone reductase that provides resistance to thiol-specific stress caused by electrophilic quinones. Also exhibits azoreductase activity. Catalyzes the reductive cleavage of the azo bond in aromatic azo compounds to the corresponding amines. This Dechloromonas aromatica (strain RCB) protein is FMN-dependent NADH:quinone oxidoreductase.